The chain runs to 379 residues: MSSETLEFSGCNFFRIRLAYSILSGRPIRIINIRKNDDRPGIRDFESKLIGLLEKVTNGTKVEISRTGTQVIFRPGMITGGVVNLDCGTERCISYFLEPLLLLSPFCKVPMVIKLKGVTNAPGEISVDGMKASWLKVYNKFVLNDEKLDIKIQARGLKPEGGGVVVFTAPIVKTLRPVKRQQVGKVCKIRGQAYVTKVTPSLAYRMIDAAKKAMHGYISDVYITVDQRKGDAGGASPGYGLFLTAETTEGVIYQAEAISRPKGESGVPILPEDIGIEAGHALLQQIYMGGALDSSAQILASTFMTLCPKDVSHFLYGPLPMYSVHALRHLKQFFEIEFKMEDFKKTLKEEEADLKTGSADKAMVTAVGVGYSNLNKTIL.

The protein belongs to the RNA 3'-terminal cyclase family. Type 2 subfamily. As to quaternary structure, part of the small subunit (SSU) processome, composed of more than 70 proteins and the RNA chaperone small nucleolar RNA (snoRNA) U3.

It localises to the nucleus. The protein resides in the nucleolus. Functionally, part of the small subunit (SSU) processome, first precursor of the small eukaryotic ribosomal subunit. During the assembly of the SSU processome in the nucleolus, many ribosome biogenesis factors, an RNA chaperone and ribosomal proteins associate with the nascent pre-rRNA and work in concert to generate RNA folding, modifications, rearrangements and cleavage as well as targeted degradation of pre-ribosomal RNA by the RNA exosome. Does not have cyclase activity. The polypeptide is Probable RNA 3'-terminal phosphate cyclase-like protein (Caenorhabditis elegans).